The primary structure comprises 305 residues: D-alanine--D-alanine ligase (305 aa).

An ATP-grasp domain is found at 105–300; that stretch reads KMIWQAAGIN…FDELVVQILE (196 aa). Residue 131–186 coordinates ATP; it reads ADRLGLPLIIKPAREGSTLGLNKVDNEQDFRSAYQAAAEYDSLVLAEQFIQGIELT. Mg(2+) contacts are provided by aspartate 254, glutamate 267, and asparagine 269.

It belongs to the D-alanine--D-alanine ligase family. The cofactor is Mg(2+). Requires Mn(2+) as cofactor.

The protein resides in the cytoplasm. The enzyme catalyses 2 D-alanine + ATP = D-alanyl-D-alanine + ADP + phosphate + H(+). It functions in the pathway cell wall biogenesis; peptidoglycan biosynthesis. Cell wall formation. This is D-alanine--D-alanine ligase from Nitrosomonas europaea (strain ATCC 19718 / CIP 103999 / KCTC 2705 / NBRC 14298).